The primary structure comprises 602 residues: Elongation factor 4 (602 aa).

Residues 2–184 form the tr-type G domain; it reads DHIRNFSIIA…AVIARMPPPK (183 aa). Residues 14-19 and 131-134 each bind GTP; these read DHGKST and NKMD.

Belongs to the TRAFAC class translation factor GTPase superfamily. Classic translation factor GTPase family. LepA subfamily.

The protein localises to the cell inner membrane. It carries out the reaction GTP + H2O = GDP + phosphate + H(+). Required for accurate and efficient protein synthesis under certain stress conditions. May act as a fidelity factor of the translation reaction, by catalyzing a one-codon backward translocation of tRNAs on improperly translocated ribosomes. Back-translocation proceeds from a post-translocation (POST) complex to a pre-translocation (PRE) complex, thus giving elongation factor G a second chance to translocate the tRNAs correctly. Binds to ribosomes in a GTP-dependent manner. This is Elongation factor 4 from Leptothrix cholodnii (strain ATCC 51168 / LMG 8142 / SP-6) (Leptothrix discophora (strain SP-6)).